The chain runs to 241 residues: 15,16-dihydrobiliverdin:ferredoxin oxidoreductase (241 aa).

It belongs to the HY2 family.

It catalyses the reaction 15,16-dihydrobiliverdin + oxidized 2[4Fe-4S]-[ferredoxin] = biliverdin IXalpha + reduced 2[4Fe-4S]-[ferredoxin] + 2 H(+). Its function is as follows. Catalyzes the two-electron reduction of biliverdin IX-alpha at the C15 methine bridge. The protein is 15,16-dihydrobiliverdin:ferredoxin oxidoreductase (pebA) of Prochlorococcus marinus (strain SARG / CCMP1375 / SS120).